The primary structure comprises 558 residues: Adenine deaminase (558 aa).

This sequence belongs to the metallo-dependent hydrolases superfamily. Adenine deaminase family. It depends on Mn(2+) as a cofactor.

The enzyme catalyses adenine + H2O + H(+) = hypoxanthine + NH4(+). The protein is Adenine deaminase of Methanoregula boonei (strain DSM 21154 / JCM 14090 / 6A8).